A 105-amino-acid chain; its full sequence is MSFKEITPQQAWEMMQQGAILVDIRDNMRFAYSHPKGAFHLTNQSFLQFEELADFDSPIIVSCYHGVSSRNVATFLVEQGYKNVFSMIGGFDGWCRAELPIDTTY.

Residues 15–103 (MQQGAILVDI…WCRAELPIDT (89 aa)) enclose the Rhodanese domain. Catalysis depends on C63, which acts as the Cysteine persulfide intermediate.

Belongs to the GlpE family.

Its subcellular location is the cytoplasm. The catalysed reaction is thiosulfate + hydrogen cyanide = thiocyanate + sulfite + 2 H(+). It catalyses the reaction thiosulfate + [thioredoxin]-dithiol = [thioredoxin]-disulfide + hydrogen sulfide + sulfite + 2 H(+). Transferase that catalyzes the transfer of sulfur from thiosulfate to thiophilic acceptors such as cyanide or dithiols. May function in a CysM-independent thiosulfate assimilation pathway by catalyzing the conversion of thiosulfate to sulfite, which can then be used for L-cysteine biosynthesis. The sequence is that of Thiosulfate sulfurtransferase GlpE from Haemophilus influenzae (strain 86-028NP).